Reading from the N-terminus, the 505-residue chain is DNA primase large subunit (505 aa).

The interdomain linker stretch occupies residues 253–270 (LSHSYTGQDYSTQKNTGK). The interval 266 to 503 (KNTGKISLDQ…LEMDLEGLEE (238 aa)) is interacts with PRIM1. C287, C367, C384, and C424 together coordinate [4Fe-4S] cluster. Residues 300–442 (HLRHGGRMQY…NVDDCGFSLN (143 aa)) are RNA:DNA duplex binding. The disordered stretch occupies residues 463-486 (KEISQPETPQHKPSTQKTRDAASA). Positions 467 to 478 (QPETPQHKPSTQ) are enriched in polar residues. Position 470 is a phosphothreonine (T470).

It belongs to the eukaryotic-type primase large subunit family. Heterodimer of a catalytic subunit PRIM1 and a regulatory subunit PRIM2, also known as the DNA primase complex. Interacts via (C-terminus) with PRIM1. Component of the alpha DNA polymerase complex (also known as the alpha DNA polymerase-primase complex) consisting of four subunits: the catalytic subunit POLA1, the regulatory subunit POLA2, and the primase complex subunits PRIM1 and PRIM2 respectively. Within the complex, POLA1 directly interacts with PRIM2. [4Fe-4S] cluster is required as a cofactor.

In terms of biological role, regulatory subunit of the DNA primase complex and component of the DNA polymerase alpha complex (also known as the alpha DNA polymerase-primase complex) which play an essential role in the initiation of DNA synthesis. During the S phase of the cell cycle, the DNA polymerase alpha complex (composed of a catalytic subunit POLA1, an accessory subunit POLA2 and two primase subunits, the catalytic subunit PRIM1 and the regulatory subunit PRIM2) is recruited to DNA at the replicative forks via direct interactions with MCM10 and WDHD1. The primase subunit of the polymerase alpha complex initiates DNA synthesis by oligomerising short RNA primers on both leading and lagging strands. These primers are initially extended by the polymerase alpha catalytic subunit and subsequently transferred to polymerase delta and polymerase epsilon for processive synthesis on the lagging and leading strand, respectively. In the primase complex, both subunits are necessary for the initial di-nucleotide formation, but the extension of the primer depends only on the catalytic subunit. Binds RNA:DNA duplex and coordinates the catalytic activities of PRIM1 and POLA2 during primase-to-polymerase switch. The protein is DNA primase large subunit (Prim2) of Mus musculus (Mouse).